Consider the following 204-residue polypeptide: Holliday junction branch migration complex subunit RuvA (204 aa).

The tract at residues 1-64 (MIGHLTGRLV…EDAHLLFGFS (64 aa)) is domain I. The domain II stretch occupies residues 65–143 (QKTDRTLFRE…GIQQEDFFIE (79 aa)). Positions 144–155 (SQHLKQPEHALN) are flexible linker. Residues 156-204 (EQDIPASEAISALIALGYKAAEAEKLVKKISKPALSSEQLIREALKAAL) form a domain III region.

This sequence belongs to the RuvA family. As to quaternary structure, homotetramer. Forms an RuvA(8)-RuvB(12)-Holliday junction (HJ) complex. HJ DNA is sandwiched between 2 RuvA tetramers; dsDNA enters through RuvA and exits via RuvB. An RuvB hexamer assembles on each DNA strand where it exits the tetramer. Each RuvB hexamer is contacted by two RuvA subunits (via domain III) on 2 adjacent RuvB subunits; this complex drives branch migration. In the full resolvosome a probable DNA-RuvA(4)-RuvB(12)-RuvC(2) complex forms which resolves the HJ.

Its subcellular location is the cytoplasm. Functionally, the RuvA-RuvB-RuvC complex processes Holliday junction (HJ) DNA during genetic recombination and DNA repair, while the RuvA-RuvB complex plays an important role in the rescue of blocked DNA replication forks via replication fork reversal (RFR). RuvA specifically binds to HJ cruciform DNA, conferring on it an open structure. The RuvB hexamer acts as an ATP-dependent pump, pulling dsDNA into and through the RuvAB complex. HJ branch migration allows RuvC to scan DNA until it finds its consensus sequence, where it cleaves and resolves the cruciform DNA. This Pasteurella multocida (strain Pm70) protein is Holliday junction branch migration complex subunit RuvA.